We begin with the raw amino-acid sequence, 502 residues long: MATKKATMIIEKDFKIAEIDKRIYGSFIEHLGRAVYGGIYEPGHPQADENGFRQDVIELVKELQVPIIRYPGGNFVSGYNWEDGVGPKEQRPRRLDLAWKSVETNEIGLNEFMDWAKMVGAEVNMAVNLGTRGIDAARNLVEYCNHPSGSYYSDLRIAHGYKEPHKIKTWCLGNEMDGPWQIGHKTAVEYGRIACEAAKVMKWVDPTIELVVCGSSNRNMPTFAEWEATVLDHTYDHVDYISLHQYYGNRDNDTANYLALSLEMDDFIRSVVAIADYVKAKKRSKKTIHLSFDEWNVWYHSNEADKLIEPWTVAPPLLEDIYNFEDALLVGCMLITLMKHADRVKIACLAQLVNVIAPIMTEKNGPAWKQTIYYPFMHASVYGRGVALHPVISSPKYDSKDFTDVPYLESIAVYNEEKEEVTIFAVNRDMEDALLLECDVRSFEDYRVIEHIVLEHDNVKQTNSAQSSPVVPHRNGDAQLSDRKVSATLPKLSWNVIRLGKR.

Residues Glu29, Asn74, and Asn174 each coordinate alpha-L-arabinofuranose. Glu175 serves as the catalytic Proton donor/acceptor. Positions 246, 294, and 351 each coordinate alpha-L-arabinofuranose. The active-site Nucleophile is the Glu294.

Belongs to the glycosyl hydrolase 51 family. Homohexamer; trimer of dimers.

The protein localises to the cytoplasm. The enzyme catalyses Hydrolysis of terminal non-reducing alpha-L-arabinofuranoside residues in alpha-L-arabinosides.. It participates in glycan metabolism; L-arabinan degradation. Its activity is regulated as follows. Strongly inhibited by Hg(2+). Functionally, involved in the degradation of arabinan and is a key enzyme in the complete degradation of the plant cell wall. Catalyzes the cleavage of terminal alpha-(1-&gt;5)-arabinofuranosyl bonds in different hemicellulosic homopolysaccharides (branched and debranched arabinans). It acts preferentially on aryl-alpha-L-arabinofuranosides, and is much less effective on aryl-beta-D-xylopyranosides. The polypeptide is Intracellular exo-alpha-(1-&gt;5)-L-arabinofuranosidase (abfA) (Geobacillus stearothermophilus (Bacillus stearothermophilus)).